The primary structure comprises 645 residues: Matrix metalloproteinase-24 (645 aa).

The span at 1 to 10 shows a compositional bias: low complexity; it reads MPRSRGGRAA. The segment at 1–26 is disordered; sequence MPRSRGGRAAPGPPPPPPPPGQAPRW. Positions 1 to 52 are cleaved as a signal peptide; it reads MPRSRGGRAAPGPPPPPPPPGQAPRWSRWRVPGRLLLLLLPALCCLPGAARA. A compositionally biased stretch (pro residues) spans 11–22; that stretch reads PGPPPPPPPPGQ. The propeptide occupies 53–155; that stretch reads AAAAAGAGNR…HLSRRRRNKR (103 aa). The Extracellular segment spans residues 53 to 602; that stretch reads AAAAAGAGNR…INDVPGSVNA (550 aa). The Cysteine switch signature appears at 137–144; it reads PRCGVPDH. Cys139 and His282 together coordinate Zn(2+). Glu283 is a catalytic residue. The Zn(2+) site is built by His286 and His292. Residues 323–380 form a disordered region; that stretch reads QKIYGPPAEPLEPTRPLPTLPVRRIHSPSERKHERQPRPPRPPLGDRPSTPGTKPNIC. The span at 329–341 shows a compositional bias: pro residues; the sequence is PAEPLEPTRPLPT. Basic and acidic residues predominate over residues 349 to 359; the sequence is SPSERKHERQP. Hemopexin repeat units follow at residues 377–425, 426–471, 473–521, and 522–569; these read PNIC…WKGL, PARI…GSCL, REGI…KGIP, and QAPQ…WMGC. Cys380 and Cys569 form a disulfide bridge. Residues 603 to 623 traverse the membrane as a helical segment; that stretch reads VAVVIPCILSLCILVLVYTIF. Residues 624-645 lie on the Cytoplasmic side of the membrane; the sequence is QFKNKTGPQPVTYYKRPVQEWV. Residues 643–645 carry the PDZ-binding motif; sequence EWV.

This sequence belongs to the peptidase M10A family. Interacts (via PDZ-binding motif) with APBA3 (via PDZ domain). Interacts with GRIP1 and GRIP2. Zn(2+) serves as cofactor. The cofactor is Ca(2+). Post-translationally, cleaved by a furin endopeptidase in the trans-Golgi network. As to expression, predominantly expressed in brain, kidney, pancreas and lung. Overexpressed in a series of brain tumors, including astrocytomas and glioblastomas.

The protein localises to the cell membrane. It is found in the golgi apparatus. It localises to the trans-Golgi network membrane. Its subcellular location is the secreted. The protein resides in the extracellular space. The protein localises to the extracellular matrix. Its function is as follows. Metalloprotease that mediates cleavage of N-cadherin (CDH2) and acts as a regulator of neuro-immune interactions and neural stem cell quiescence. Involved in cell-cell interactions between nociceptive neurites and mast cells, possibly by mediating cleavage of CDH2, thereby acting as a mediator of peripheral thermal nociception and inflammatory hyperalgesia. Key regulator of neural stem cells quiescence by mediating cleavage of CDH2, affecting CDH2-mediated anchorage of neural stem cells to ependymocytes in the adult subependymal zone, leading to modulate their quiescence. May play a role in axonal growth. Able to activate progelatinase A. May also be a proteoglycanase involved in degradation of proteoglycans, such as dermatan sulfate and chondroitin sulfate proteoglycans. Cleaves partially fibronectin, but not collagen type I, nor laminin. In Homo sapiens (Human), this protein is Matrix metalloproteinase-24 (MMP24).